The following is a 223-amino-acid chain: Adenylate kinase 4, mitochondrial (223 aa).

15-20 (GSGKGT) provides a ligand contact to a ribonucleoside 5'-triphosphate. The NMP stretch occupies residues 35–64 (SSGHLLRENLKTNTEVGDVAKQYLEKGLLV). Residues serine 36 and arginine 41 each coordinate AMP. Lysine 60 carries the post-translational modification N6-succinyllysine. Residues 62–64 (LLV), 89–92 (GFPR), and glutamine 96 each bind AMP. The tract at residues 125 to 162 (RRWIHPSSGRVYNLDFNPPQVLGVDDITGEPLVQQEDD) is LID. A ribonucleoside 5'-triphosphate contacts are provided by residues arginine 126 and 135–136 (VY). Arginine 170 is a binding site for AMP. Lysine 175 is modified (N6-acetyllysine). 2 positions are modified to N6-acetyllysine; alternate: lysine 179 and lysine 186. N6-succinyllysine; alternate is present on residues lysine 179 and lysine 186. Threonine 199 contacts a ribonucleoside 5'-triphosphate.

Belongs to the adenylate kinase family. AK3 subfamily. In terms of assembly, monomer. Interacts with SLC25A5/ANT2. In terms of tissue distribution, expressed in the pyramidal cells in the hippocampus.

Its subcellular location is the mitochondrion matrix. The catalysed reaction is a ribonucleoside 5'-phosphate + ATP = a ribonucleoside 5'-diphosphate + ADP. It carries out the reaction AMP + ATP = 2 ADP. It catalyses the reaction GTP + AMP = GDP + ADP. The enzyme catalyses CMP + ATP = CDP + ADP. The catalysed reaction is GTP + CMP = CDP + GDP. It carries out the reaction dAMP + ATP = dADP + ADP. It catalyses the reaction dCMP + ATP = dCDP + ADP. The enzyme catalyses a 2'-deoxyribonucleoside 5'-diphosphate + ATP = a 2'-deoxyribonucleoside 5'-triphosphate + ADP. The catalysed reaction is a ribonucleoside 5'-diphosphate + ATP = a ribonucleoside 5'-triphosphate + ADP. It carries out the reaction GDP + ATP = GTP + ADP. It catalyses the reaction CDP + GTP = CTP + GDP. The enzyme catalyses CDP + ATP = CTP + ADP. The catalysed reaction is UDP + ATP = UTP + ADP. It carries out the reaction GTP + UDP = UTP + GDP. It catalyses the reaction dADP + GTP = dATP + GDP. The enzyme catalyses dCDP + GTP = dCTP + GDP. The catalysed reaction is dCDP + ATP = dCTP + ADP. It carries out the reaction dGDP + ATP = dGTP + ADP. It catalyses the reaction dTDP + GTP = dTTP + GDP. The enzyme catalyses dTDP + ATP = dTTP + ADP. Functionally, broad-specificity mitochondrial nucleoside phosphate kinase involved in cellular nucleotide homeostasis by catalyzing nucleoside-phosphate interconversions. Similar to other adenylate kinases, preferentially catalyzes the phosphorylation of the nucleoside monophosphate AMP with ATP as phosphate donor to produce ADP. Phosphorylates only AMP when using GTP as phosphate donor. In vitro, can also catalyze the phosphorylation of CMP, dAMP and dCMP and use GTP as an alternate phosphate donor. Moreover, exhibits a diphosphate kinase activity, producing ATP, CTP, GTP, UTP, TTP, dATP, dCTP and dGTP from the corresponding diphosphate substrates with either ATP or GTP as phosphate donors. Plays a role in controlling cellular ATP levels by regulating phosphorylation and activation of the energy sensor protein kinase AMPK. Plays a protective role in the cellular response to oxidative stress. In Rattus norvegicus (Rat), this protein is Adenylate kinase 4, mitochondrial.